The primary structure comprises 139 residues: Large ribosomal subunit protein uL13 (139 aa).

The protein belongs to the universal ribosomal protein uL13 family. As to quaternary structure, part of the 50S ribosomal subunit.

Its function is as follows. This protein is one of the early assembly proteins of the 50S ribosomal subunit, although it is not seen to bind rRNA by itself. It is important during the early stages of 50S assembly. In Nitratiruptor sp. (strain SB155-2), this protein is Large ribosomal subunit protein uL13.